The primary structure comprises 427 residues: Serine--tRNA ligase (427 aa).

An L-serine-binding site is contributed by 231–233 (TAE). 262-264 (RSE) provides a ligand contact to ATP. An L-serine-binding site is contributed by Glu285. 349-352 (EISS) is a binding site for ATP. An L-serine-binding site is contributed by Ser385.

The protein belongs to the class-II aminoacyl-tRNA synthetase family. Type-1 seryl-tRNA synthetase subfamily. As to quaternary structure, homodimer. The tRNA molecule binds across the dimer.

The protein localises to the cytoplasm. It carries out the reaction tRNA(Ser) + L-serine + ATP = L-seryl-tRNA(Ser) + AMP + diphosphate + H(+). It catalyses the reaction tRNA(Sec) + L-serine + ATP = L-seryl-tRNA(Sec) + AMP + diphosphate + H(+). It functions in the pathway aminoacyl-tRNA biosynthesis; selenocysteinyl-tRNA(Sec) biosynthesis; L-seryl-tRNA(Sec) from L-serine and tRNA(Sec): step 1/1. Functionally, catalyzes the attachment of serine to tRNA(Ser). Is also able to aminoacylate tRNA(Sec) with serine, to form the misacylated tRNA L-seryl-tRNA(Sec), which will be further converted into selenocysteinyl-tRNA(Sec). In Rhizobium etli (strain ATCC 51251 / DSM 11541 / JCM 21823 / NBRC 15573 / CFN 42), this protein is Serine--tRNA ligase.